The following is a 344-amino-acid chain: S-adenosylmethionine:tRNA ribosyltransferase-isomerase (344 aa).

Belongs to the QueA family. As to quaternary structure, monomer.

The protein resides in the cytoplasm. The enzyme catalyses 7-aminomethyl-7-carbaguanosine(34) in tRNA + S-adenosyl-L-methionine = epoxyqueuosine(34) in tRNA + adenine + L-methionine + 2 H(+). It participates in tRNA modification; tRNA-queuosine biosynthesis. Functionally, transfers and isomerizes the ribose moiety from AdoMet to the 7-aminomethyl group of 7-deazaguanine (preQ1-tRNA) to give epoxyqueuosine (oQ-tRNA). The sequence is that of S-adenosylmethionine:tRNA ribosyltransferase-isomerase from Acinetobacter baylyi (strain ATCC 33305 / BD413 / ADP1).